A 423-amino-acid chain; its full sequence is AUGMIN subunit 4 (423 aa).

Residues I267–K287 adopt a coiled-coil conformation.

The protein belongs to the HAUS4 family. In terms of assembly, part of the augmin complex composed of 8 subunits. The complex acts on microtubules and interacts with gamma-tubulin in spindles and the phragmoplast.

It localises to the cytoplasm. It is found in the cytoskeleton. The protein localises to the spindle. Its subcellular location is the phragmoplast. In terms of biological role, involved in microtubules reorganization during spindle and phragmoplast development. The sequence is that of AUGMIN subunit 4 (AUG4) from Arabidopsis thaliana (Mouse-ear cress).